A 293-amino-acid polypeptide reads, in one-letter code: MDKLNSTLTAVKNLRSNVRLCFEHLADGTDGESGEESRNKFVNDFQERFAAINSQIREVEQLINGLPVPPTPYSLGNTAYLAQETSQDRQALYPQLVNSYKWMDKVHDHSFLAFNNLNQNTLRRSYNYCSQKRQRLPFSSFNNDPDHIDKLLSEINTPPHTSYRIFRPFGTNAVTIVTISNVMKAAIVFKGVLIEWVTVKGFDEPLEHDDLWAESRYEVFRKVQDHAHSAMLHFFSPTLPDLAVKSYITWLNSHVKLFLEPCKRCGKFVVNGLPPTWRDLRTLEPFHEDCRNC.

This sequence belongs to the Mediator complex subunit 27 family. As to quaternary structure, component of the Mediator complex, which includes at least CDK8, MED4, MED6, MED11, MED14, MED17, MED18, MED20, MED21, MED22, MED27, MED28, MED30 and MED31.

It is found in the nucleus. Functionally, component of the Mediator complex, a coactivator involved in the regulated transcription of nearly all RNA polymerase II-dependent genes. Mediator functions as a bridge to convey information from gene-specific regulatory proteins to the basal RNA polymerase II transcription machinery. Mediator is recruited to promoters by direct interactions with regulatory proteins and serves as a scaffold for the assembly of a functional preinitiation complex with RNA polymerase II and the general transcription factors. Required for activated transcription of the MtnA gene. This is Mediator of RNA polymerase II transcription subunit 27 (MED27) from Drosophila melanogaster (Fruit fly).